The following is a 481-amino-acid chain: Multiple inositol polyphosphate phosphatase 1 (481 aa).

An N-terminal signal peptide occupies residues 1 to 30 (MLRGARSHLPASVAPAAVLAAALLSSFARC). The active site involves His-89. N-linked (GlcNAc...) asparagine glycans are attached at residues Asn-236 and Asn-475. Residues 478 to 481 (SDEL) carry the Prevents secretion from ER motif.

The protein belongs to the histidine acid phosphatase family. MINPP1 subfamily. N-glycosylated. As to expression, widely expressed with highest levels in kidney, intestine, thymus and liver.

It is found in the endoplasmic reticulum lumen. It localises to the secreted. Its subcellular location is the cell membrane. It carries out the reaction 1D-myo-inositol hexakisphosphate + H2O = 1D-myo-inositol 1,2,4,5,6-pentakisphosphate + phosphate. It catalyses the reaction 1D-myo-inositol 1,2,4,5,6-pentakisphosphate + H2O = 1D-myo-inositol 1,2,5,6-tetrakisphosphate + phosphate. The enzyme catalyses 1D-myo-inositol 1,2,5,6-tetrakisphosphate + H2O = 1D-myo-inositol 1,2,6-trisphosphate + phosphate. The catalysed reaction is 1D-myo-inositol 1,2,6-trisphosphate + H2O = 1D-myo-inositol 1,2-bisphosphate + phosphate. It carries out the reaction 1D-myo-inositol 1,2-bisphosphate + H2O = 1D-myo-inositol 2-phosphate + phosphate. It catalyses the reaction 1D-myo-inositol hexakisphosphate + H2O = 1D-myo-inositol 1,2,3,5,6-pentakisphosphate + phosphate. The enzyme catalyses 1D-myo-inositol 1,2,3,5,6-pentakisphosphate + H2O = 1D-myo-inositol 1,2,3,6-tetrakisphosphate + phosphate. The catalysed reaction is 1D-myo-inositol 1,2,3,6-tetrakisphosphate + H2O = 1D-myo-inositol 1,2,3-trisphosphate + phosphate. It carries out the reaction 1D-myo-inositol 1,2,3-trisphosphate + H2O = 1D-myo-inositol 2,3-bisphosphate + phosphate. It catalyses the reaction 1D-myo-inositol 2,3-bisphosphate + H2O = 1D-myo-inositol 2-phosphate + phosphate. The enzyme catalyses 1D-myo-inositol 1,3,4,5,6-pentakisphosphate + H2O = 1D-myo-inositol 1,4,5,6-tetrakisphosphate + phosphate. The catalysed reaction is 1D-myo-inositol 1,4,5,6-tetrakisphosphate + H2O = 1D-myo-inositol 1,4,5-trisphosphate + phosphate. It carries out the reaction (2R)-2,3-bisphosphoglycerate + H2O = (2R)-2-phosphoglycerate + phosphate. In terms of biological role, multiple inositol polyphosphate phosphatase that hydrolyzes 1D-myo-inositol 1,3,4,5,6-pentakisphosphate (InsP5[2OH]) and 1D-myo-inositol hexakisphosphate (InsP6) to a range of less phosphorylated inositol phosphates. This regulates the availability of these various small molecule second messengers and metal chelators which control many aspects of cell physiology. Has a weak in vitro activity towards 1D-myo-inositol 1,4,5-trisphosphate which is unlikely to be physiologically relevant. By regulating intracellular inositol polyphosphates pools, which act as metal chelators, it may control the availability of intracellular calcium and iron, which are important for proper neuronal development and homeostasis. May have a dual substrate specificity, and function as a 2,3-bisphosphoglycerate 3-phosphatase hydrolyzing 2,3-bisphosphoglycerate to 2-phosphoglycerate. 2,3-bisphosphoglycerate (BPG) is formed as part of the Rapoport-Luebering glycolytic bypass and is a regulator of systemic oxygen homeostasis as the major allosteric effector of hemoglobin. The chain is Multiple inositol polyphosphate phosphatase 1 from Mus musculus (Mouse).